The primary structure comprises 363 residues: Phosphoserine aminotransferase (363 aa).

R42 lines the L-glutamate pocket. Pyridoxal 5'-phosphate contacts are provided by residues 76-77 (GR), W102, T156, D175, and Q198. N6-(pyridoxal phosphate)lysine is present on K199. 240-241 (NT) contacts pyridoxal 5'-phosphate.

This sequence belongs to the class-V pyridoxal-phosphate-dependent aminotransferase family. SerC subfamily. In terms of assembly, homodimer. Pyridoxal 5'-phosphate is required as a cofactor.

The protein localises to the cytoplasm. The catalysed reaction is O-phospho-L-serine + 2-oxoglutarate = 3-phosphooxypyruvate + L-glutamate. It carries out the reaction 4-(phosphooxy)-L-threonine + 2-oxoglutarate = (R)-3-hydroxy-2-oxo-4-phosphooxybutanoate + L-glutamate. Its pathway is amino-acid biosynthesis; L-serine biosynthesis; L-serine from 3-phospho-D-glycerate: step 2/3. It participates in cofactor biosynthesis; pyridoxine 5'-phosphate biosynthesis; pyridoxine 5'-phosphate from D-erythrose 4-phosphate: step 3/5. In terms of biological role, catalyzes the reversible conversion of 3-phosphohydroxypyruvate to phosphoserine and of 3-hydroxy-2-oxo-4-phosphonooxybutanoate to phosphohydroxythreonine. The protein is Phosphoserine aminotransferase of Shewanella denitrificans (strain OS217 / ATCC BAA-1090 / DSM 15013).